The sequence spans 1098 residues: Eukaryotic translation initiation factor 3 subunit A (1098 aa).

The 180-residue stretch at 324 to 503 (AQEQATRVLL…DCVRFGSSDA (180 aa)) folds into the PCI domain. Residues 574-844 (TEIERIHRRK…ARQAVIDSQR (271 aa)) are a coiled coil. Disordered regions lie at residues 599-648 (EKAA…KIKR) and 805-1098 (RAEK…NWRR). 3 stretches are compositionally biased toward basic and acidic residues: residues 608–648 (QAKR…KIKR), 805–857 (RAEK…REME), and 877–895 (MPQR…EPFR). Residues 905-914 (DSSWRSSAQP) show a composition bias toward polar residues. 2 stretches are compositionally biased toward basic and acidic residues: residues 916–978 (RKPD…ERGA) and 1054–1079 (LPPR…RDGP). Residues 1080–1098 (NRNSGANNAGNADSANWRR) show a composition bias toward low complexity.

This sequence belongs to the eIF-3 subunit A family. As to quaternary structure, component of the eukaryotic translation initiation factor 3 (eIF-3) complex.

Its subcellular location is the cytoplasm. In terms of biological role, RNA-binding component of the eukaryotic translation initiation factor 3 (eIF-3) complex, which is involved in protein synthesis of a specialized repertoire of mRNAs and, together with other initiation factors, stimulates binding of mRNA and methionyl-tRNAi to the 40S ribosome. The eIF-3 complex specifically targets and initiates translation of a subset of mRNAs involved in cell proliferation. This Caenorhabditis briggsae protein is Eukaryotic translation initiation factor 3 subunit A.